The sequence spans 857 residues: Mitogen-activated protein kinase kinase kinase dlk-1 (857 aa).

Residues 62–304 form the Protein kinase domain; it reads ISNLEWLGSG…FSHIRQHWEI (243 aa). ATP-binding positions include 68 to 76 and K89; that span reads LGSGSQGAV. The Proton acceptor role is filled by D173. 4 disordered regions span residues 441–503, 572–625, 733–775, and 818–857; these read EEMS…ISRN, RIAS…PSRN, NAND…MESE, and HSIK…AVRI. Positions 467-488 are enriched in low complexity; it reads SSGAQSSPFSRQSSCRSSAGQQ. The span at 609–623 shows a compositional bias: polar residues; sequence APRSSSKLNRSSYPS. Over residues 753–762 the composition is skewed to acidic residues; the sequence is ADVESSEDEG. Polar residues predominate over residues 763–772; sequence NGNNILNTSM.

The protein belongs to the protein kinase superfamily. STE Ser/Thr protein kinase family. MAP kinase kinase kinase subfamily. It depends on Mg(2+) as a cofactor. Ubiquitinated by rpm-1. Negatively regulated by ubiquitination by fsn-1 bound rpm-1, followed by degradation.

The protein localises to the synapse. It catalyses the reaction L-seryl-[protein] + ATP = O-phospho-L-seryl-[protein] + ADP + H(+). It carries out the reaction L-threonyl-[protein] + ATP = O-phospho-L-threonyl-[protein] + ADP + H(+). In terms of biological role, component of a MAP kinase pathway that functions presynaptically to regulate synaptic architecture and presynaptic differentiation. Phosphorylates and activates mkk-4. This chain is Mitogen-activated protein kinase kinase kinase dlk-1, found in Caenorhabditis briggsae.